Here is a 240-residue protein sequence, read N- to C-terminus: MADIRITGRMVNFSRITFDTNDHDVIRQQLSNILNEGSYQGTVVIIDSTVEQELIALIQLLVSLGLQPMAVIDGILGDEARAIQFPVLPADQPLQRIKPTAEQVAIVEKPSSAQASVETKKPLNNNAVAHITSYHDEILRTGQSLVQDQGDIILKAAMNSGSEVIASGNIHIYGTVRGRVIAGAGGHAAARIFCQSLEAELVSIAGTYCVADDIPKHVVKKPVHIYLNEKQELEFEALEL.

It belongs to the MinC family. Interacts with MinD and FtsZ.

Its function is as follows. Cell division inhibitor that blocks the formation of polar Z ring septums. Rapidly oscillates between the poles of the cell to destabilize FtsZ filaments that have formed before they mature into polar Z rings. Prevents FtsZ polymerization. The sequence is that of Probable septum site-determining protein MinC from Acinetobacter baumannii (strain AYE).